The primary structure comprises 77 residues: Homeodomain-only protein (77 aa).

Residues 7-65 (AALGVRLTEDQVKVLEENFTKVSKHPDETTLMLIAAECGLSEEQTAVWFRMRNAQWRKA) constitute a DNA-binding region (homeobox; degenerate).

Its subcellular location is the nucleus. The protein localises to the cytoplasm. In terms of biological role, atypical homeodomain protein which does not bind DNA and is required to modulate cardiac growth and development. May act via an interaction with SRF, leading to modulate the expression of SRF-dependent cardiac-specific genes and cardiac development. May act as a co-chaperone for HSPA1A and HSPA1B chaperone proteins and assist in chaperone-mediated protein refolding. This is Homeodomain-only protein (hopx) from Danio rerio (Zebrafish).